Here is a 204-residue protein sequence, read N- to C-terminus: MIASLRGTVISIGLGTAVIECQGVGYEVTTTPTTLARLQRGEEATLLTTMVVREDAMKLYGFIDDQSREMFALLQTVTGLGPRLALACESVLTPLEIAQAIAGGDAKTLQRVPGVGKRMADRLIVELKDKVAAYTVGVVDDGAPTAPTQGVAPVVVVDQVTQALTGLGFTEKQADDAVAAVLSADPGLDTSAALRAALAKLGGK.

The domain I stretch occupies residues 1-63; it reads MIASLRGTVI…EDAMKLYGFI (63 aa). Positions 64-142 are domain II; it reads DDQSREMFAL…AYTVGVVDDG (79 aa). The tract at residues 143 to 151 is flexible linker; sequence APTAPTQGV. The tract at residues 152–204 is domain III; that stretch reads APVVVVDQVTQALTGLGFTEKQADDAVAAVLSADPGLDTSAALRAALAKLGGK.

It belongs to the RuvA family. As to quaternary structure, homotetramer. Forms an RuvA(8)-RuvB(12)-Holliday junction (HJ) complex. HJ DNA is sandwiched between 2 RuvA tetramers; dsDNA enters through RuvA and exits via RuvB. An RuvB hexamer assembles on each DNA strand where it exits the tetramer. Each RuvB hexamer is contacted by two RuvA subunits (via domain III) on 2 adjacent RuvB subunits; this complex drives branch migration. In the full resolvosome a probable DNA-RuvA(4)-RuvB(12)-RuvC(2) complex forms which resolves the HJ.

It is found in the cytoplasm. Functionally, the RuvA-RuvB-RuvC complex processes Holliday junction (HJ) DNA during genetic recombination and DNA repair, while the RuvA-RuvB complex plays an important role in the rescue of blocked DNA replication forks via replication fork reversal (RFR). RuvA specifically binds to HJ cruciform DNA, conferring on it an open structure. The RuvB hexamer acts as an ATP-dependent pump, pulling dsDNA into and through the RuvAB complex. HJ branch migration allows RuvC to scan DNA until it finds its consensus sequence, where it cleaves and resolves the cruciform DNA. The chain is Holliday junction branch migration complex subunit RuvA from Corynebacterium efficiens (strain DSM 44549 / YS-314 / AJ 12310 / JCM 11189 / NBRC 100395).